We begin with the raw amino-acid sequence, 731 residues long: NADH-ubiquinone oxidoreductase 75 kDa subunit, mitochondrial (731 aa).

A mitochondrion-targeting transit peptide spans 1–27 (MIRAPLVKALGALGSPTHQMASRAVRT). One can recognise a 2Fe-2S ferredoxin-type domain in the interval 40-118 (EKIEVFVDDI…GWRIKTNSDL (79 aa)). 4 residues coordinate [2Fe-2S] cluster: Cys74, Cys85, Cys88, and Cys102. A 4Fe-4S His(Cys)3-ligated-type domain is found at 118-157 (LTRKAREGVMEFLLMNHPLDCPICDQGGECDLQDQAMAFG). 8 residues coordinate [4Fe-4S] cluster: His134, Cys138, Cys141, Cys147, Cys190, Cys193, Cys196, and Cys240. The 57-residue stretch at 259–315 (IRKVSSIDVLDAVGSNIVVSTRTNEVLRILPRENEDVNEEWLADKSRFACDGLKRQR) folds into the 4Fe-4S Mo/W bis-MGD-type domain.

Belongs to the complex I 75 kDa subunit family. Complex I is composed of about 45 different subunits. Requires [2Fe-2S] cluster as cofactor. The cofactor is [4Fe-4S] cluster.

The protein resides in the mitochondrion inner membrane. The enzyme catalyses a ubiquinone + NADH + 5 H(+)(in) = a ubiquinol + NAD(+) + 4 H(+)(out). Functionally, core subunit of the mitochondrial membrane respiratory chain NADH dehydrogenase (Complex I) that is believed to belong to the minimal assembly required for catalysis. Complex I functions in the transfer of electrons from NADH to the respiratory chain. The immediate electron acceptor for the enzyme is believed to be ubiquinone. This is the largest subunit of complex I and it is a component of the iron-sulfur (IP) fragment of the enzyme. It may form part of the active site crevice where NADH is oxidized. The protein is NADH-ubiquinone oxidoreductase 75 kDa subunit, mitochondrial of Drosophila melanogaster (Fruit fly).